Here is a 1101-residue protein sequence, read N- to C-terminus: Isoleucine--tRNA ligase (1101 aa).

The short motif at 50-60 is the 'HIGH' region element; that stretch reads PFANGLPHYGH. Positions 629-633 match the 'KMSKS' region motif; sequence KLSKR. Lys632 is a binding site for ATP.

This sequence belongs to the class-I aminoacyl-tRNA synthetase family. IleS type 2 subfamily. In terms of assembly, monomer. Requires Zn(2+) as cofactor.

It localises to the cytoplasm. It catalyses the reaction tRNA(Ile) + L-isoleucine + ATP = L-isoleucyl-tRNA(Ile) + AMP + diphosphate. Functionally, catalyzes the attachment of isoleucine to tRNA(Ile). As IleRS can inadvertently accommodate and process structurally similar amino acids such as valine, to avoid such errors it has two additional distinct tRNA(Ile)-dependent editing activities. One activity is designated as 'pretransfer' editing and involves the hydrolysis of activated Val-AMP. The other activity is designated 'posttransfer' editing and involves deacylation of mischarged Val-tRNA(Ile). The sequence is that of Isoleucine--tRNA ligase from Anaplasma marginale (strain St. Maries).